The sequence spans 238 residues: Uridylate kinase (238 aa).

12–15 (KLSG) contributes to the ATP binding site. G54 is a binding site for UMP. ATP is bound by residues G55 and R59. UMP contacts are provided by residues D74 and 135–142 (TGNPFFTT). Residues T162, Y168, and D171 each contribute to the ATP site.

It belongs to the UMP kinase family. Homohexamer.

It localises to the cytoplasm. It catalyses the reaction UMP + ATP = UDP + ADP. The protein operates within pyrimidine metabolism; CTP biosynthesis via de novo pathway; UDP from UMP (UMPK route): step 1/1. Inhibited by UTP. Catalyzes the reversible phosphorylation of UMP to UDP. The chain is Uridylate kinase from Aromatoleum aromaticum (strain DSM 19018 / LMG 30748 / EbN1) (Azoarcus sp. (strain EbN1)).